The primary structure comprises 535 residues: Transmembrane protein 151 homolog (535 aa).

Helical transmembrane passes span 27 to 47 (GYGK…YATY), 73 to 93 (YNFV…MECW), and 254 to 274 (PWFL…SWPL). The segment at 498–535 (ASISHSSSKDLKSLTLKNNNGAANNNNNNNNENPEEQP) is disordered. Low complexity predominate over residues 510–529 (SLTLKNNNGAANNNNNNNNE).

It belongs to the TMEM151 family.

The protein localises to the membrane. In Caenorhabditis briggsae, this protein is Transmembrane protein 151 homolog.